Here is a 124-residue protein sequence, read N- to C-terminus: MKNVLIIFGKPYCSICENVSEAVEELKSEYDILHVDILSFFLKDGDSSMLGDVKRGTLIGNFAAHLSNYIVSIFKYNPQTKQMAFVDINKSLDFTKTDKSLVNLEILKSEIEKANYGVWPPVTE.

A disulfide bridge links cysteine 13 with cysteine 16.

Belongs to the glutaredoxin family. In terms of assembly, homodimer.

The protein resides in the host cytoplasm. Glutaredoxin necessary for virion morphogenesis and virus replication. Functions as a thiol-disulfide transfer protein between membrane-associated OPG128 and substrates OPG095 or OPG053. The complete pathway for formation of disulfide bonds in intracellular virion membrane proteins sequentially involves oxidation of OPG072, OPG128 and OPG088. Exhibit thioltransferase and dehydroascorbate reductase activities in vitro. The polypeptide is Glutaredoxin-2 (OPG088) (Camelus).